Here is a 306-residue protein sequence, read N- to C-terminus: Immune protein Tsi7 (306 aa).

In terms of assembly, interacts with Tse7.

In terms of biological role, immunity protein that plays a role in preventing early activation of toxin Tse7. Protects thereby cells from Tse7 DNase activity. This is Immune protein Tsi7 from Pseudomonas aeruginosa (strain ATCC 15692 / DSM 22644 / CIP 104116 / JCM 14847 / LMG 12228 / 1C / PRS 101 / PAO1).